The sequence spans 282 residues: U1 small nuclear ribonucleoprotein A (282 aa).

An N-acetylalanine modification is found at alanine 2. The RRM 1 domain maps to 10–89 (HTIYINNLNE…KPMRIQYAKT (80 aa)). Lysine 60 is modified (N6-acetyllysine). The interval 100 to 132 (TFVERDRKREKRKPKSQETPATKKAVQGGGATP) is disordered. A Phosphothreonine modification is found at threonine 131. Arginine 152 carries the post-translational modification Omega-N-methylarginine. In terms of domain architecture, RRM 2 spans 208–282 (HILFLTNLPE…NAMKISFAKK (75 aa)).

It belongs to the RRM U1 A/B'' family. In terms of assembly, U1 snRNP is composed of the 7 core Sm proteins SNRPB, SNRPD1, SNRPD2, SNRPD3, SNRPE, SNRPF and SNRPG that assemble in a heptameric protein ring on the Sm site of the small nuclear RNA to form the core snRNP, and at least three U1 snRNP-specific proteins SNRNP70/U1-70K, SNRPA/U1-A and SNRPC/U1-C. Interacts with SFPQ; component of a snRNP-free complex with SFPQ. Interacts with IVNS1ABP (via BACK domain); the interaction is indirect.

It localises to the nucleus. Component of the spliceosomal U1 snRNP, which is essential for recognition of the pre-mRNA 5' splice-site and the subsequent assembly of the spliceosome. U1 snRNP is the first snRNP to interact with pre-mRNA. This interaction is required for the subsequent binding of U2 snRNP and the U4/U6/U5 tri-snRNP. SNRPA binds stem loop II of U1 snRNA. In a snRNP-free form (SF-A) may be involved in coupled pre-mRNA splicing and polyadenylation process. May bind preferentially to the 5'-UGCAC-3' motif on RNAs. This is U1 small nuclear ribonucleoprotein A (SNRPA) from Homo sapiens (Human).